A 400-amino-acid chain; its full sequence is Acetate kinase (400 aa).

Asn-10 contributes to the Mg(2+) binding site. An ATP-binding site is contributed by Lys-17. Arg-91 lines the substrate pocket. The active-site Proton donor/acceptor is Asp-150. ATP-binding positions include 210 to 214 (HLGNG), 285 to 287 (DCR), and 333 to 337 (GIGEN). Residue Glu-387 coordinates Mg(2+).

It belongs to the acetokinase family. Homodimer. Mg(2+) is required as a cofactor. The cofactor is Mn(2+).

It localises to the cytoplasm. The catalysed reaction is acetate + ATP = acetyl phosphate + ADP. The protein operates within metabolic intermediate biosynthesis; acetyl-CoA biosynthesis; acetyl-CoA from acetate: step 1/2. In terms of biological role, catalyzes the formation of acetyl phosphate from acetate and ATP. Can also catalyze the reverse reaction. The chain is Acetate kinase from Yersinia pseudotuberculosis serotype IB (strain PB1/+).